The primary structure comprises 151 residues: UPF0178 protein Swoo_1444 (151 aa).

It belongs to the UPF0178 family.

This is UPF0178 protein Swoo_1444 from Shewanella woodyi (strain ATCC 51908 / MS32).